Reading from the N-terminus, the 359-residue chain is GTP cyclohydrolase FolE2 (359 aa).

Belongs to the GTP cyclohydrolase IV family.

It carries out the reaction GTP + H2O = 7,8-dihydroneopterin 3'-triphosphate + formate + H(+). Its pathway is cofactor biosynthesis; 7,8-dihydroneopterin triphosphate biosynthesis; 7,8-dihydroneopterin triphosphate from GTP: step 1/1. In terms of biological role, converts GTP to 7,8-dihydroneopterin triphosphate. In Cereibacter sphaeroides (strain ATCC 17029 / ATH 2.4.9) (Rhodobacter sphaeroides), this protein is GTP cyclohydrolase FolE2.